The chain runs to 196 residues: Ribosome maturation factor RimP (196 aa).

A disordered region spans residues 163–196; sequence GLAPSKPTGPAPKRPKPKTNSSSNEPAAKKPRAE.

The protein belongs to the RimP family.

Its subcellular location is the cytoplasm. Functionally, required for maturation of 30S ribosomal subunits. The polypeptide is Ribosome maturation factor RimP (Stenotrophomonas maltophilia (strain R551-3)).